The chain runs to 232 residues: MNAHNMRGPPGDLAKVVPGSRSGWNEGSRCRQADKGDGQCRNGGRDASEHVEARALFLNSNISSKARFSLRTPRVVPSSRCRRRRADAEARRRTAHARHDTNLRTGERCPNESPLLAAILADATNLGLSRRAAASQGVTATNSPGRRMPLSGSFHPIAHKQLVAAAYASNAVSMDGDIQQDNLNGFLTSEPAARGCGQGRRLASSRPCMMASFHRNQSFARAHRRPTPTRPD.

The disordered stretch occupies residues 1 to 46 (MNAHNMRGPPGDLAKVVPGSRSGWNEGSRCRQADKGDGQCRNGGRD). Residues 28–46 (SRCRQADKGDGQCRNGGRD) are compositionally biased toward basic and acidic residues.

This is an uncharacterized protein from Rhizobium meliloti (Ensifer meliloti).